The chain runs to 377 residues: Chaperone protein DnaJ (377 aa).

One can recognise a J domain in the interval 5 to 70 (DYYEVLGVAK…QKRAAYDRYG (66 aa)). A CR-type zinc finger spans residues 137–215 (GFDTEIRVPS…CDGVGRTRRN (79 aa)). Zn(2+) is bound by residues Cys-150, Cys-153, Cys-167, Cys-170, Cys-189, Cys-192, Cys-203, and Cys-206. CXXCXGXG motif repeat units follow at residues 150–157 (CDTCHGSG), 167–174 (CRTCGGSG), 189–196 (CPTCHGTG), and 203–210 (CPSCDGVG).

Belongs to the DnaJ family. In terms of assembly, homodimer. The cofactor is Zn(2+).

The protein resides in the cytoplasm. In terms of biological role, participates actively in the response to hyperosmotic and heat shock by preventing the aggregation of stress-denatured proteins and by disaggregating proteins, also in an autonomous, DnaK-independent fashion. Unfolded proteins bind initially to DnaJ; upon interaction with the DnaJ-bound protein, DnaK hydrolyzes its bound ATP, resulting in the formation of a stable complex. GrpE releases ADP from DnaK; ATP binding to DnaK triggers the release of the substrate protein, thus completing the reaction cycle. Several rounds of ATP-dependent interactions between DnaJ, DnaK and GrpE are required for fully efficient folding. Also involved, together with DnaK and GrpE, in the DNA replication of plasmids through activation of initiation proteins. This is Chaperone protein DnaJ from Bordetella parapertussis (strain 12822 / ATCC BAA-587 / NCTC 13253).